We begin with the raw amino-acid sequence, 565 residues long: Peptide transport periplasmic protein SapA (565 aa).

Positions 1–23 are cleaved as a signal peptide; sequence MLRLNLRFLSFLLCIIQSVELQA.

Belongs to the bacterial solute-binding protein 5 family.

The protein resides in the periplasm. Involved in a peptide intake transport system that plays a role in the resistance to antimicrobial peptides. This Haemophilus influenzae (strain ATCC 51907 / DSM 11121 / KW20 / Rd) protein is Peptide transport periplasmic protein SapA (sapA).